The chain runs to 331 residues: L-lactate dehydrogenase A chain (331 aa).

Residues 29-57 and Arg-98 contribute to the NAD(+) site; that span reads GMVG…MEDK. The substrate site is built by Arg-105, Asn-137, and Arg-168. Asn-137 lines the NAD(+) pocket. His-192 serves as the catalytic Proton acceptor. Thr-247 is a substrate binding site.

Belongs to the LDH/MDH superfamily. LDH family. Homotetramer.

The protein resides in the cytoplasm. It catalyses the reaction (S)-lactate + NAD(+) = pyruvate + NADH + H(+). It functions in the pathway fermentation; pyruvate fermentation to lactate; (S)-lactate from pyruvate: step 1/1. Interconverts simultaneously and stereospecifically pyruvate and lactate with concomitant interconversion of NADH and NAD(+). In Dissostichus mawsoni (Antarctic cod), this protein is L-lactate dehydrogenase A chain (ldha).